The following is a 340-amino-acid chain: Fructose-1,6-bisphosphatase class 1 (340 aa).

Positions 107, 126, 128, and 129 each coordinate Mg(2+). Asparagine 215 serves as a coordination point for substrate. Glutamate 287 serves as a coordination point for Mg(2+).

This sequence belongs to the FBPase class 1 family. Homotetramer. Mg(2+) is required as a cofactor.

It localises to the cytoplasm. The catalysed reaction is beta-D-fructose 1,6-bisphosphate + H2O = beta-D-fructose 6-phosphate + phosphate. It functions in the pathway carbohydrate biosynthesis; gluconeogenesis. In Brucella ovis (strain ATCC 25840 / 63/290 / NCTC 10512), this protein is Fructose-1,6-bisphosphatase class 1.